Here is a 63-residue protein sequence, read N- to C-terminus: Large ribosomal subunit protein bL33m (63 aa).

It belongs to the bacterial ribosomal protein bL33 family.

The protein localises to the mitochondrion. This is Large ribosomal subunit protein bL33m (mrpl33) from Dictyostelium discoideum (Social amoeba).